Reading from the N-terminus, the 219-residue chain is ATP phosphoribosyltransferase (219 aa).

The protein belongs to the ATP phosphoribosyltransferase family. Short subfamily. Heteromultimer composed of HisG and HisZ subunits.

Its subcellular location is the cytoplasm. It carries out the reaction 1-(5-phospho-beta-D-ribosyl)-ATP + diphosphate = 5-phospho-alpha-D-ribose 1-diphosphate + ATP. The protein operates within amino-acid biosynthesis; L-histidine biosynthesis; L-histidine from 5-phospho-alpha-D-ribose 1-diphosphate: step 1/9. Its function is as follows. Catalyzes the condensation of ATP and 5-phosphoribose 1-diphosphate to form N'-(5'-phosphoribosyl)-ATP (PR-ATP). Has a crucial role in the pathway because the rate of histidine biosynthesis seems to be controlled primarily by regulation of HisG enzymatic activity. This Paramagnetospirillum magneticum (strain ATCC 700264 / AMB-1) (Magnetospirillum magneticum) protein is ATP phosphoribosyltransferase.